The sequence spans 660 residues: DNA ligase (660 aa).

NAD(+) is bound by residues 33 to 37 (DFVYD), 82 to 83 (SL), and Glu110. Residue Lys112 is the N6-AMP-lysine intermediate of the active site. 4 residues coordinate NAD(+): Arg133, Glu167, Lys281, and Lys305. Residues Cys396, Cys399, Cys412, and Cys417 each coordinate Zn(2+). Residues 583–660 (DENKLLVGKK…SFEDIKSYLD (78 aa)) enclose the BRCT domain.

This sequence belongs to the NAD-dependent DNA ligase family. LigA subfamily. It depends on Mg(2+) as a cofactor. Mn(2+) is required as a cofactor.

It carries out the reaction NAD(+) + (deoxyribonucleotide)n-3'-hydroxyl + 5'-phospho-(deoxyribonucleotide)m = (deoxyribonucleotide)n+m + AMP + beta-nicotinamide D-nucleotide.. Functionally, DNA ligase that catalyzes the formation of phosphodiester linkages between 5'-phosphoryl and 3'-hydroxyl groups in double-stranded DNA using NAD as a coenzyme and as the energy source for the reaction. It is essential for DNA replication and repair of damaged DNA. The chain is DNA ligase from Borreliella afzelii (strain PKo) (Borrelia afzelii).